Here is a 1024-residue protein sequence, read N- to C-terminus: Beta-galactosidase (1024 aa).

Substrate is bound by residues N103 and D202. Residue D202 participates in Na(+) binding. E417, H419, and E462 together coordinate Mg(2+). Substrate-binding positions include E462 and 538–541 (EYAH). E462 serves as the catalytic Proton donor. E538 functions as the Nucleophile in the catalytic mechanism. N598 provides a ligand contact to Mg(2+). F602 and N605 together coordinate Na(+). Substrate-binding residues include N605 and W1000.

The protein belongs to the glycosyl hydrolase 2 family. Homotetramer. Mg(2+) is required as a cofactor. It depends on Na(+) as a cofactor.

The enzyme catalyses Hydrolysis of terminal non-reducing beta-D-galactose residues in beta-D-galactosides.. In Shigella sonnei (strain Ss046), this protein is Beta-galactosidase.